We begin with the raw amino-acid sequence, 173 residues long: Co-chaperone protein HscB (173 aa).

The J domain occupies 2 to 74 (DYFTLFGLPV…LKRAEYMLSL (73 aa)).

It belongs to the HscB family. As to quaternary structure, interacts with HscA and stimulates its ATPase activity. Interacts with IscU.

Co-chaperone involved in the maturation of iron-sulfur cluster-containing proteins. Seems to help targeting proteins to be folded toward HscA. In Serratia proteamaculans (strain 568), this protein is Co-chaperone protein HscB.